Reading from the N-terminus, the 753-residue chain is Eukaryotic translation initiation factor 3 subunit B (753 aa).

In terms of domain architecture, RRM spans 42-129 (TMLVVDNIPI…NVLHVNRFGD (88 aa)). WD repeat units follow at residues 142–185 (DLPS…WWNG), 203–241 (NSKW…GPIG), 321–362 (DTQS…LLDR), 537–580 (LDSK…DERR), and 595–640 (GEHY…LLHE). Positions 723 to 753 (KSKAKIDVKGQEARVEEWVEELIDETEELSM) form a coiled coil.

Belongs to the eIF-3 subunit B family. As to quaternary structure, component of the eukaryotic translation initiation factor 3 (eIF-3) complex.

The protein localises to the cytoplasm. RNA-binding component of the eukaryotic translation initiation factor 3 (eIF-3) complex, which is involved in protein synthesis of a specialized repertoire of mRNAs and, together with other initiation factors, stimulates binding of mRNA and methionyl-tRNAi to the 40S ribosome. The eIF-3 complex specifically targets and initiates translation of a subset of mRNAs involved in cell proliferation. The chain is Eukaryotic translation initiation factor 3 subunit B from Cryptococcus neoformans var. neoformans serotype D (strain B-3501A) (Filobasidiella neoformans).